Reading from the N-terminus, the 191-residue chain is uncharacterized protein (191 aa).

One can recognise a Fe2OG dioxygenase domain in the interval 87–184; it reads EFDSALIFHY…RIAITFRQMG (98 aa).

This is an uncharacterized protein from Acanthamoeba polyphaga mimivirus (APMV).